The chain runs to 338 residues: Solute carrier family 35 member G5 (338 aa).

The tract at residues 1–28 (MAGSHPYFNLPDSTHPSPPSGPPSLRWH) is disordered. The next 9 helical transmembrane spans lie at 37–57 (TNGLLVALLGGGLPAGFVGPL), 67–87 (LPSLELLICRCLFHLPIALLL), 105–125 (CFCALLNVLSIGCAYSAVQVV), 160–180 (CGLLGSILGLIIIVGPGLWTL), 190–210 (ALGYVQAFLGGLALSLGLLVY), 221–241 (TVAFLSGLVGLLGSVPGLFVL), 250–270 (LLSWSCVGAVGILTLVSFTCV), 281–301 (LVCAVLHSEVVVALILQYYML), and 310–330 (IMGAGVVLGNITIIPAWNLSC). Positions 49–174 (LPAGFVGPLS…SILGLIIIVG (126 aa)) constitute an EamA 1 domain. Residues 272–325 (YAVTKAHPALVCAVLHSEVVVALILQYYMLPETVAPSDIMGAGVVLGNITIIPA) enclose the EamA 2 domain.

Belongs to the SLC35G solute transporter family.

It localises to the membrane. The protein is Solute carrier family 35 member G5 (SLC35G5) of Gorilla gorilla gorilla (Western lowland gorilla).